The following is a 1067-amino-acid chain: MAILHFSLPLIVSFLRPHASPRFFLLPRSLSQSPFLSRRRFHRTSAVSSAAVHHQSYRNPDDDVTRAVSVPTFQQAIQRLQEYWASVGCAVMQPSNTEVGAGTMNPCTFLRVLGPEPWNVAYVEPSIRPDDSRYGENPNRLQRHTQFQVILKPDPGNSQQLFINSLSALGIDVTAHDIRFVEDNWESPVLGAWGLGWEIWMDGMEITQFTYFQQAGSLPLSPVSVEITYGLERIIMLLQEVDHFKKILYADGITYGELFLENEKEMSSYYLEHASVDRLQKHFDYFDEEARSLLALGLPIPAYDQLLKTSHAFNILDARGFIGVTERARYFGRMRSLARQCAQLWLATRESLGHPLGVASEPVPPVCHRAALEKVAEKVSEDPRSFIIEIGTEEMPPQDVINASEQLRVLVLELLENQRLRHGAVKAFGTPRRLVVLVDAMSSKQLEEEVEVRGPPASKAFDDEGNPTKAAEGFSRRYGVPLEKLYRKVSGKTEYVHARVTEPARLALEVLSEDLPGILAKISFPKSMRWNSSVMFSRPIRWVMALHGDLVVPFSFAGISSGNVSCGLRNTASASLLVQNAESYEDTMRNSGINIEIEERKKIILEKSNALAKSVSGRLVVPQNLLNEVANLVEAPVPLIGKFKESFLELPEELLTIVMQKHQKYFSIIDESGQLLPYFIAVANGAINEDVVKKGNEAVLRARYEDAKFFYEVDTRKRFSEFRDQLQGILFHEKLGTMLDKMNRLKKMVSKLCLALKIDEDLLPVVEDAASLAMSDLATAVVTEFTALSGIMARHYALRDGYSEQIAEALLEITLPRFSGDVIPKTDAGMVLAIGDRLDSLVGLFAAGCQPSSTNDPFGLRRISYGLVQILVEKDKNVNFKRVLELAASVQPTKVEANTVEDVYQFVTRRLEQLLVDNGVSPEVVRSVLAERGNNPCLAARTAYKTEKLSKGEMFPKIVEAYSRPTRIVRGKDVGVGVEVDENAFETPQERTLWSTYTSIKDRIHTGIEIEDFTEISMQLVEPLEDFFNNVFVMVEEERVRKNRLALLNNIANLPKGVIDLSFLPGF.

A chloroplast and mitochondrion-targeting transit peptide spans 1–50 (MAILHFSLPLIVSFLRPHASPRFFLLPRSLSQSPFLSRRRFHRTSAVSSA). A substrate-binding site is contributed by Glu513. Residues 589-596 (RNSGINIE), 619-624 (LVVPQN), 744-745 (RL), and 859-862 (GLRR) each bind ATP. 624 to 628 (NLLNE) is a binding site for substrate. 855-859 (NDPFG) provides a ligand contact to substrate.

This sequence belongs to the class-II aminoacyl-tRNA synthetase family. As to quaternary structure, homodimer.

It localises to the plastid. It is found in the chloroplast. Its subcellular location is the mitochondrion. The enzyme catalyses tRNA(Gly) + glycine + ATP = glycyl-tRNA(Gly) + AMP + diphosphate. Functionally, catalyzes the attachment of glycine to tRNA(Gly). Is also able produce diadenosine tetraphosphate (Ap4A), a universal pleiotropic signaling molecule needed for cell regulation pathways, by direct condensation of 2 ATPs. The sequence is that of Glycine--tRNA ligase, chloroplastic/mitochondrial 2 from Arabidopsis thaliana (Mouse-ear cress).